A 274-amino-acid chain; its full sequence is Undecaprenyl-diphosphatase (274 aa).

The next 7 membrane-spanning stretches (helical) occupy residues 4-24 (ILLL…FLPI), 46-63 (LFEI…VWEY), 82-102 (KFIL…LAFG), 109-129 (LFNP…ILWA), 184-204 (ATEF…FYQL), 218-238 (MWAV…RWLL), and 249-269 (FAWY…FGWV).

The protein belongs to the UppP family.

It is found in the cell inner membrane. The catalysed reaction is di-trans,octa-cis-undecaprenyl diphosphate + H2O = di-trans,octa-cis-undecaprenyl phosphate + phosphate + H(+). Functionally, catalyzes the dephosphorylation of undecaprenyl diphosphate (UPP). Confers resistance to bacitracin. This chain is Undecaprenyl-diphosphatase, found in Dechloromonas aromatica (strain RCB).